Consider the following 320-residue polypeptide: mRNA decay activator protein ZFP36 (320 aa).

The interval 1–15 (MDLSAIYESLMSMSH) is necessary for nuclear export. The tract at residues 1–93 (MDLSAIYESL…PTSPTATPTT (93 aa)) is necessary and sufficient for the association with mRNA decay enzymes and mRNA decay activation. 2 necessary for localization of ARE-containing mRNAs to processing bodies (PBs) regions span residues 1-167 (MDLS…DLAL) and 93-320 (TSSR…SVSE). A disordered region spans residues 17–50 (LSPDHGGTESSGGLWNINSSDSIPSGVTSRLTGR). Polar residues predominate over residues 27–50 (SGGLWNINSSDSIPSGVTSRLTGR). Serine 53 carries the post-translational modification Phosphoserine; by MAPKAPK2. Serine 59 bears the Phosphoserine mark. A P-P-P-P-G repeat occupies 64 to 68 (PPPPG). Residues 66–85 (PPGFAPLAPRPGPELSPSPT) are compositionally biased toward pro residues. Positions 66 to 95 (PPGFAPLAPRPGPELSPSPTSPTATPTTSS) are disordered. 2 positions are modified to phosphoserine: serine 81 and serine 83. Residue threonine 85 is modified to Phosphothreonine. The residue at position 86 (serine 86) is a Phosphoserine. The segment covering 86-95 (SPTATPTTSS) has biased composition (low complexity). The segment at 88 to 161 (TATPTTSSRY…GSRCHFIHNP (74 aa)) is necessary for nuclear localization. The necessary for RNA-binding stretch occupies residues 90–166 (TPTTSSRYKT…FIHNPTEDLA (77 aa)). C3H1-type zinc fingers lie at residues 96 to 124 (RYKT…HGPG) and 134 to 162 (KYKT…HNPT). Residues 96 to 187 (RYKTELCRTY…ISFSGLPSGR (92 aa)) form a necessary for interaction with PABPN1 region. The interval 167–320 (LPGQPHVLRQ…PIFNRISVSE (154 aa)) is necessary for mRNA decay activation. Serine 179 is subject to Phosphoserine; by MAPKAPK2. Residues 180 to 310 (FSGLPSGRRT…PQPPAPPRRL (131 aa)) are disordered. Serine 190 bears the Phosphoserine mark. The stretch at 191 to 195 (PPPPG) is one P-P-P-P-G repeat. Residues 197–209 (SGPSLSSCSFSPS) show a composition bias toward low complexity. Residue serine 211 is modified to Phosphoserine. Residues 212 to 216 (PPPPG) form a P-P-P-P-G repeat. At serine 221 the chain carries Phosphoserine; by MAPK1; in vitro. At threonine 251 the chain carries Phosphothreonine. Residues serine 270 and serine 290 each carry the phosphoserine modification. A compositionally biased stretch (low complexity) spans 280–290 (SSGSSLGGSDS). The span at 300–309 (PPQPPAPPRR) shows a compositional bias: pro residues. The segment at 306 to 320 (PPRRLPIFNRISVSE) is interaction with CNOT1. The residue at position 317 (serine 317) is a Phosphoserine.

As to quaternary structure, associates with cytoplasmic CCR4-NOT and PAN2-PAN3 deadenylase complexes to trigger ARE-containing mRNA deadenylation and decay processes. Part of a mRNA decay activation complex at least composed of poly(A)-specific exoribonucleases CNOT6, EXOSC2 and XRN1 and mRNA-decapping enzymes DCP1A and DCP2. Associates with the RNA exosome complex. Interacts (via phosphorylated form) with 14-3-3 proteins; these interactions promote exclusion of ZFP36 from cytoplasmic stress granules in response to arsenite treatment in a MAPKAPK2-dependent manner and does not prevent CCR4-NOT deadenylase complex recruitment or ZFP36-induced ARE-containing mRNA deadenylation and decay processes. Interacts with 14-3-3 proteins; these interactions occur in response to rapamycin in an Akt-dependent manner. Interacts with AGO2 and AGO4. Interacts (via C-terminus) with CNOT1; this interaction occurs in a RNA-independent manner and induces mRNA deadenylation. Interacts (via N-terminus) with CNOT6. Interacts with CNOT6L. Interacts (via C-terminus) with CNOT7; this interaction occurs in a RNA-independent manner, induces mRNA deadenylation and is inhibited in a phosphorylation MAPKAPK2-dependent manner. Interacts (via unphosphorylated form) with CNOT8; this interaction occurs in a RNA-independent manner and is inhibited in a phosphorylation MAPKAPK2-dependent manner. Interacts with DCP1A. Interacts (via N-terminus) with DCP2. Interacts with EDC3. Interacts (via N-terminus) with EXOSC2. Interacts with heat shock 70 kDa proteins. Interacts with KHSRP; this interaction increases upon cytokine-induced treatment. Interacts with MAP3K4; this interaction enhances the association with SH3KBP1/CIN85. Interacts with MAPKAPK2; this interaction occurs upon skeletal muscle satellite cell activation. Interacts with NCL. Interacts with NUP214; this interaction increases upon lipopolysaccharide (LPS) stimulation. Interacts with PABPC1; this interaction occurs in a RNA-dependent manner. Interacts (via hypophosphorylated form) with PABPN1 (via RRM domain and C-terminal arginine-rich region); this interaction occurs in the nucleus in a RNA-independent manner, decreases in presence of single-stranded poly(A) RNA-oligomer and in a p38 MAPK-dependent-manner and inhibits nuclear poly(A) tail synthesis. Interacts with PAN2. Interacts (via C3H1-type zinc finger domains) with PKM. Interacts (via C3H1-type zinc finger domains) with nuclear RNA poly(A) polymerase. Interacts with PPP2CA; this interaction occurs in LPS-stimulated cells and induces ZFP36 dephosphorylation, and hence may promote ARE-containing mRNAs decay. Interacts (via C-terminus) with PRR5L (via C-terminus); this interaction may accelerate ZFP36-mediated mRNA decay during stress. Interacts (via C-terminus) with SFN; this interaction occurs in a phosphorylation-dependent manner. Interacts (via extreme C-terminal region) with SH3KBP1/CIN85 (via SH3 domains); this interaction enhances MAP3K4-induced phosphorylation of ZFP36 at Ser-59 and Ser-86 and does not alter neither ZFP36 binding to ARE-containing transcripts nor TNF-alpha mRNA decay. Interacts with XRN1. Interacts (via C-terminus and Ser-179 phosphorylated form) with YWHAB; this interaction occurs in a p38/MAPKAPK2-dependent manner, increases cytoplasmic localization of ZFP36 and protects ZFP36 from Ser-179 dephosphorylation by serine/threonine phosphatase 2A, and hence may be crucial for stabilizing ARE-containing mRNAs. Interacts (via phosphorylated form) with YWHAE. Interacts (via C-terminus) with YWHAG; this interaction occurs in a phosphorylation-dependent manner. Interacts with YWHAH; this interaction occurs in a phosphorylation-dependent manner. Interacts with YWHAQ; this interaction occurs in a phosphorylation-dependent manner. Interacts with (via C-terminus) YWHAZ; this interaction occurs in a phosphorylation-dependent manner. Does not interact with SH3KBP1. Interacts (via P-P-P-P-G repeats) with GIGYF2; the interaction is direct. In terms of processing, phosphorylated. Phosphorylation at serine and/or threonine residues occurs in a p38 MAPK- and MAPKAPK2-dependent manner. Phosphorylated by MAPKAPK2 at Ser-53 and Ser-179; phosphorylation increases its stability and cytoplasmic localization, promotes binding to 14-3-3 adapter proteins and inhibits the recruitment of cytoplasmic CCR4-NOT and PAN2-PAN3 deadenylase complexes to the mRNA decay machinery, thereby inhibiting ZFP36-induced ARE-containing mRNA deadenylation and decay processes. Phosphorylation by MAPKAPK2 does not impair ARE-containing RNA-binding. Phosphorylated in a MAPKAPK2- and p38 MAPK-dependent manner upon skeletal muscle satellite cell activation; this phosphorylation inhibits ZFP36-mediated mRNA decay activity, and hence stabilizes MYOD1 mRNA. Phosphorylated by MAPK1 upon mitogen stimulation. Phosphorylated at Ser-59 and Ser-86; these phosphorylations increase in a SH3KBP1-dependent manner. Phosphorylated at serine and threonine residues in a pyruvate kinase PKM- and p38 MAPK-dependent manner. Phosphorylation at Ser-53 may participate in the PKM-mediated degradation of ZFP36 in a p38 MAPK-dependent manner. Dephosphorylated by serine/threonine phosphatase 2A at Ser-179. Post-translationally, ubiquitinated; pyruvate kinase (PKM)-dependent ubiquitination leads to proteasomal degradation through a p38 MAPK signaling pathway.

The protein resides in the nucleus. The protein localises to the cytoplasm. Its subcellular location is the cytoplasmic granule. It is found in the P-body. Functionally, zinc-finger RNA-binding protein that destabilizes numerous cytoplasmic AU-rich element (ARE)-containing mRNA transcripts by promoting their poly(A) tail removal or deadenylation, and hence provide a mechanism for attenuating protein synthesis. Acts as an 3'-untranslated region (UTR) ARE mRNA-binding adapter protein to communicate signaling events to the mRNA decay machinery. Recruits deadenylase CNOT7 (and probably the CCR4-NOT complex) via association with CNOT1, and hence promotes ARE-mediated mRNA deadenylation. Also functions by recruiting components of the cytoplasmic RNA decay machinery to the bound ARE-containing mRNAs. Self regulates by destabilizing its own mRNA. Binds to 3'-UTR ARE of numerous mRNAs. Also binds to ARE of its own mRNA. Plays a role in anti-inflammatory responses; suppresses tumor necrosis factor (TNF)-alpha production by stimulating ARE-mediated TNF-alpha mRNA decay and several other inflammatory ARE-containing mRNAs in interferon (IFN)- and/or lipopolysaccharide (LPS)-induced macrophages. Also plays a role in the regulation of dendritic cell maturation at the post-transcriptional level, and hence operates as part of a negative feedback loop to limit the inflammatory response. Promotes ARE-mediated mRNA decay of hypoxia-inducible factor HIF1A mRNA during the response of endothelial cells to hypoxia. Positively regulates early adipogenesis of preadipocytes by promoting ARE-mediated mRNA decay of immediate early genes (IEGs). Negatively regulates hematopoietic/erythroid cell differentiation by promoting ARE-mediated mRNA decay of the transcription factor STAT5B mRNA. Plays a role in maintaining skeletal muscle satellite cell quiescence by promoting ARE-mediated mRNA decay of the myogenic determination factor MYOD1 mRNA. Also associates with and regulates the expression of non-ARE-containing target mRNAs at the post-transcriptional level, such as MHC class I mRNAs. Participates in association with argonaute RISC catalytic components in the ARE-mediated mRNA decay mechanism; assists microRNA (miRNA) targeting ARE-containing mRNAs. May also play a role in the regulation of cytoplasmic mRNA decapping; enhances decapping of ARE-containing RNAs, in vitro. Involved in the delivery of target ARE-mRNAs to processing bodies (PBs). In addition to its cytosolic mRNA-decay function, affects nuclear pre-mRNA processing. Negatively regulates nuclear poly(A)-binding protein PABPN1-stimulated polyadenylation activity on ARE-containing pre-mRNA during LPS-stimulated macrophages. Also involved in the regulation of stress granule (SG) and P-body (PB) formation and fusion. Plays a role in the regulation of keratinocyte proliferation, differentiation and apoptosis. Plays a role as a tumor suppressor by inhibiting cell proliferation in breast cancer cells. The protein is mRNA decay activator protein ZFP36 of Rattus norvegicus (Rat).